The sequence spans 355 residues: Tyrosine recombinase XerC (355 aa).

The Core-binding (CB) domain occupies 4 to 89; it reads TQFDGDIDSF…AVRGFFAWAY (86 aa). Positions 138–180 are disordered; the sequence is DDGGAAAASGSGKAAGKTADKSADTVNRSEAPARADKRDNARV. Positions 141-154 are enriched in low complexity; sequence GAAAASGSGKAAGK. In terms of domain architecture, Tyr recombinase spans 158 to 349; it reads KSADTVNRSE…SIEQLKNRYG (192 aa). Residues 168-178 are compositionally biased toward basic and acidic residues; that stretch reads APARADKRDNA. Residues R200, K224, H301, R304, and H327 contribute to the active site. The active-site O-(3'-phospho-DNA)-tyrosine intermediate is the Y336.

This sequence belongs to the 'phage' integrase family. XerC subfamily. In terms of assembly, forms a cyclic heterotetrameric complex composed of two molecules of XerC and two molecules of XerD.

It localises to the cytoplasm. Site-specific tyrosine recombinase, which acts by catalyzing the cutting and rejoining of the recombining DNA molecules. The XerC-XerD complex is essential to convert dimers of the bacterial chromosome into monomers to permit their segregation at cell division. It also contributes to the segregational stability of plasmids. This is Tyrosine recombinase XerC from Bifidobacterium longum subsp. infantis (strain ATCC 15697 / DSM 20088 / JCM 1222 / NCTC 11817 / S12).